A 99-amino-acid chain; its full sequence is Aspartyl/glutamyl-tRNA(Asn/Gln) amidotransferase subunit C (99 aa).

This sequence belongs to the GatC family. As to quaternary structure, heterotrimer of A, B and C subunits.

The catalysed reaction is L-glutamyl-tRNA(Gln) + L-glutamine + ATP + H2O = L-glutaminyl-tRNA(Gln) + L-glutamate + ADP + phosphate + H(+). It catalyses the reaction L-aspartyl-tRNA(Asn) + L-glutamine + ATP + H2O = L-asparaginyl-tRNA(Asn) + L-glutamate + ADP + phosphate + 2 H(+). Its function is as follows. Allows the formation of correctly charged Asn-tRNA(Asn) or Gln-tRNA(Gln) through the transamidation of misacylated Asp-tRNA(Asn) or Glu-tRNA(Gln) in organisms which lack either or both of asparaginyl-tRNA or glutaminyl-tRNA synthetases. The reaction takes place in the presence of glutamine and ATP through an activated phospho-Asp-tRNA(Asn) or phospho-Glu-tRNA(Gln). This chain is Aspartyl/glutamyl-tRNA(Asn/Gln) amidotransferase subunit C, found in Mycobacterium marinum (strain ATCC BAA-535 / M).